The chain runs to 166 residues: 3-dehydroquinate dehydratase (166 aa).

The active-site Proton acceptor is Tyr-22. 3 residues coordinate substrate: Asn-73, His-79, and Asp-86. His-99 functions as the Proton donor in the catalytic mechanism. Substrate is bound by residues 100-101 and Arg-110; that span reads IT.

It belongs to the type-II 3-dehydroquinase family. As to quaternary structure, homododecamer.

It carries out the reaction 3-dehydroquinate = 3-dehydroshikimate + H2O. The protein operates within metabolic intermediate biosynthesis; chorismate biosynthesis; chorismate from D-erythrose 4-phosphate and phosphoenolpyruvate: step 3/7. Catalyzes a trans-dehydration via an enolate intermediate. The polypeptide is 3-dehydroquinate dehydratase (Wolinella succinogenes (strain ATCC 29543 / DSM 1740 / CCUG 13145 / JCM 31913 / LMG 7466 / NCTC 11488 / FDC 602W) (Vibrio succinogenes)).